The primary structure comprises 287 residues: Pyridoxal kinase PdxY (287 aa).

Substrate is bound by residues serine 9 and 44-45; that span reads MQ. Residues aspartate 111, alanine 142, glutamate 147, and lysine 180 each contribute to the ATP site. Aspartate 221 contacts substrate.

It belongs to the pyridoxine kinase family. PdxY subfamily. In terms of assembly, homodimer. Mg(2+) is required as a cofactor.

The catalysed reaction is pyridoxal + ATP = pyridoxal 5'-phosphate + ADP + H(+). The protein operates within cofactor metabolism; pyridoxal 5'-phosphate salvage; pyridoxal 5'-phosphate from pyridoxal: step 1/1. In terms of biological role, pyridoxal kinase involved in the salvage pathway of pyridoxal 5'-phosphate (PLP). Catalyzes the phosphorylation of pyridoxal to PLP. This chain is Pyridoxal kinase PdxY, found in Burkholderia pseudomallei (strain K96243).